The following is a 488-amino-acid chain: Ribulose bisphosphate carboxylase large chain (488 aa).

Residues asparagine 127 and threonine 177 each contribute to the substrate site. Catalysis depends on lysine 179, which acts as the Proton acceptor. Lysine 181 contributes to the substrate binding site. 3 residues coordinate Mg(2+): lysine 205, aspartate 207, and glutamate 208. Position 205 is an N6-carboxylysine (lysine 205). Histidine 297 (proton acceptor) is an active-site residue. Residues arginine 298, histidine 330, and serine 382 each contribute to the substrate site.

The protein belongs to the RuBisCO large chain family. Type I subfamily. In terms of assembly, heterohexadecamer of 8 large chains and 8 small chains. It depends on Mg(2+) as a cofactor.

It is found in the plastid. Its subcellular location is the chloroplast. The catalysed reaction is 2 (2R)-3-phosphoglycerate + 2 H(+) = D-ribulose 1,5-bisphosphate + CO2 + H2O. The enzyme catalyses D-ribulose 1,5-bisphosphate + O2 = 2-phosphoglycolate + (2R)-3-phosphoglycerate + 2 H(+). In terms of biological role, ruBisCO catalyzes two reactions: the carboxylation of D-ribulose 1,5-bisphosphate, the primary event in carbon dioxide fixation, as well as the oxidative fragmentation of the pentose substrate in the photorespiration process. Both reactions occur simultaneously and in competition at the same active site. The protein is Ribulose bisphosphate carboxylase large chain of Olisthodiscus luteus (Marine phytoflagellate).